Consider the following 429-residue polypeptide: MAAQGYGYYRTVIFSAMFGGYSLYYFNRKTFSFVMPSLVEEIPLDKDDLGFITSSQSAAYAISKFVSGVLSDQMSARWLFSSGLLLVGLVNIFFAWSSTVPVFAALWFLNGLAQGLGWPPCGKVLRKWFEPSQFGTWWAILSTSMNLAGGLGPILATILAQSYSWRSTLALSGALCVVVSFLCLLLIHNEPADVGLRNLDPMPSEGKKGSLKEESTLQELLLSPYLWVLSTGYLVVFGVKTCCTDWGQFFLIQEKGQSALVGSSYMSALEVGGLVGSIAAGYLSDRAMAKAGLSNYGNPRHGLLLFMMAGMTVSMYLFRVTVTSDSPKLWILVLGAVFGFSSYGPIALFGVIANESAPPNLCGTSHAIVGLMANVGGFLAGLPFSTIAKHYSWSTAFWVAEVICAASTAAFFLLRNIRTKMGRVSKKAE.

A run of 10 helical transmembrane segments spans residues 84-104 (LLLV…PVFA), 105-125 (ALWF…GKVL), 139-159 (AILS…ATIL), 167-187 (STLA…LLLI), 219-239 (ELLL…VFGV), 260-280 (LVGS…SIAA), 302-322 (GLLL…RVTV), 329-349 (LWIL…IALF), 368-388 (IVGL…STIA), and 394-414 (STAF…FFLL).

This sequence belongs to the major facilitator superfamily. Organophosphate:Pi antiporter (OPA) (TC 2.A.1.4) family. Mostly expressed in liver and kidney.

Its subcellular location is the endoplasmic reticulum membrane. The catalysed reaction is D-glucose 6-phosphate(in) + phosphate(out) = D-glucose 6-phosphate(out) + phosphate(in). Its activity is regulated as follows. Inhibited by vanadate and chlorogenic acid. Its function is as follows. Inorganic phosphate and glucose-6-phosphate antiporter of the endoplasmic reticulum. Transports cytoplasmic glucose-6-phosphate into the lumen of the endoplasmic reticulum and translocates inorganic phosphate into the opposite direction. Forms with glucose-6-phosphatase the complex responsible for glucose production through glycogenolysis and gluconeogenesis. Hence, it plays a central role in homeostatic regulation of blood glucose levels. The polypeptide is Glucose-6-phosphate exchanger SLC37A4 (Homo sapiens (Human)).